We begin with the raw amino-acid sequence, 992 residues long: Disks large-associated protein 1 (992 aa).

Disordered regions lie at residues 150 to 209 (TKSH…SWWS) and 355 to 376 (KAMG…PKVA). Serine 169 is subject to Phosphoserine. Residues 194–209 (RSNASNASPTSPSWWS) are compositionally biased toward low complexity. Residues serine 362, serine 365, serine 368, serine 372, serine 389, serine 418, serine 421, serine 425, serine 428, serine 437, serine 509, serine 516, and serine 578 each carry the phosphoserine modification. Threonine 579 carries the post-translational modification Phosphothreonine. Serine 581 and serine 605 each carry phosphoserine. A Phosphothreonine modification is found at threonine 606. Phosphoserine occurs at positions 608 and 611. Interaction with DYL2 regions lie at residues 665–676 (LSIGIQVDDAEE) and 687–698 (NKFQSVGVQVEE). The tract at residues 914-980 (WKQMDPLDKK…QNSATESAES (67 aa)) is disordered. Basic and acidic residues-rich tracts occupy residues 918-927 (DPLDKKERRA) and 943-958 (IRER…EARK). Serine 947 is subject to Phosphoserine. Over residues 969–978 (VRQNSATESA) the composition is skewed to polar residues. The PDZ-binding signature appears at 990 to 992 (TRL).

Belongs to the SAPAP family. As to quaternary structure, interacts with the guanylate kinase-like domain of DLG1, DLG2, DLG3, DLG4 and AIP1. Interacts with the PDZ domain of SHANK1, SHANK2 and SHANK3. Found in a complex with DLG4 and SHANK1, SHANK2 or SHANK3. Found in a complex with DLG4 and BEGAIN. Interacts with DYL2 and LRFN1. Interacts with MPP2 (via the SH3-Guanylate kinase-like sub-module). Ubiquitinated by TRIM3; leading to proteasomal degradation. In terms of tissue distribution, highest levels in the neocortex, part of the hippocampus, the granule cell layer of the cerebellum, the glomerular layer of the olfactory bulb, the inner plexiform layer of the retina, the ventral and dorsal horn of the spinal cord, the neuromuscular junction and the submandibular ganglion.

The protein resides in the cell membrane. It localises to the postsynaptic density. The protein localises to the synapse. In terms of biological role, part of the postsynaptic scaffold in neuronal cells. This is Disks large-associated protein 1 (Dlgap1) from Mus musculus (Mouse).